Consider the following 456-residue polypeptide: Toxin CfTX-1 (456 aa).

An N-terminal signal peptide occupies residues Met1–Ala20.

This sequence belongs to the jellyfish toxin family. Type I subfamily. In terms of assembly, oligomer. In terms of processing, contains disulfide bonds. As to expression, nematocytes.

The protein resides in the secreted. It is found in the nematocyst. It localises to the target cell membrane. Functionally, may cause profound effects on the cardiovascular system of anesthetized rats (at 25 ug/kg), since the fraction containing this toxin and CfTX-2 produces an initial increase in mean arterial pressure, followed by cardiovascular collapse in all animals within 1 minute of injection. To note, the same fraction does not induce significant change in heart rate. Has weak hemolytic activity. Is lethal to crayfish. Causes cutaneous inflammation in humans. May act as a pore-forming toxin, disrupting normal transmembrane ion concentration gradients in susceptible cells. The sequence is that of Toxin CfTX-1 from Chironex fleckeri (Australian box jellyfish).